The chain runs to 738 residues: MEHTYQYAWVIPLLPLPVIMSMGFGLFLIPTATKNLRRIWAFPSILLLSIAMVFSLHLSIQQINGSSIYQYLWSWTINNDFSLEFGYLVDPLTSIMLILITTVGILVLIYSDDYMSHDEGYLRFFVYISFFNTSMLGLVTSSNLIQIYFFWELVGMCSYLLIGFWFTRPIAASACQKAFVTNRVGDFGLLLGILGFFWITGSLEFRDLFKIANNWIPNNGINSLLTTLCAFLLFLGAVAKSAQFPLHVWLPDAMEGPTPISALIHAATMVAAGIFLLARLLPLFISLPWIMSFISLIGTITLFLGATLALAQRDIKRSLAYSTMSQLGYMMLALGIGSYQAALFHLITHAYSKALLFLGSGSVIHSMEPLVGYSPDKSQNMVLMGGLRKYVPITRTTFLCGTLSLCGIPPLACFWSKDEILSNSWLYSPFFGIIASFTAGLTAFYMFRIYLLTFDGYLRVHFQNYSSTKEGSLYSISLWGKSISKGVNRDFVLSTMKSGVSFFSQNIPKIPANTRNKIGSFSTPFGAKNTFVYPHETGNTMLFPLLILLLFTLFIGSIGIHFDNGVKDNRILELTILSKWLTPSINLFQENSNSSINSYEFLTNAISSVSLAIFGLFIAYIFYGSAYSFFQNLNFQNSLVKKNPKKSFLDEVKKKIYSWSYNRGYIDFFYTRVFILGIRKLAELTHFFDKGVIDGITNGVGLAGFCIGEEIKYVGGGRISSYLFFFLCYVSLFLFFIP.

The next 17 membrane-spanning stretches (helical) occupy residues 9–29 (WVIP…LFLI), 39–59 (IWAF…LHLS), 89–109 (VDPL…LVLI), 125–145 (FVYI…SNLI), 147–167 (IYFF…FWFT), 185–205 (GDFG…SLEF), 219–239 (NGIN…GAVA), 258–278 (TPIS…FLLA), 280–300 (LLPL…IGTI), 327–347 (LGYM…FHLI), 354–374 (ALLF…VGYS), 396–416 (TTFL…CFWS), 425–445 (WLYS…TAFY), 542–562 (LFPL…GIHF), 610–630 (SLAI…YSFF), 691–711 (GVID…GEEI), and 717–737 (GRIS…LFFI).

The protein belongs to the complex I subunit 5 family. In terms of assembly, NDH is composed of at least 16 different subunits, 5 of which are encoded in the nucleus.

It localises to the plastid. It is found in the chloroplast thylakoid membrane. It catalyses the reaction a plastoquinone + NADH + (n+1) H(+)(in) = a plastoquinol + NAD(+) + n H(+)(out). The enzyme catalyses a plastoquinone + NADPH + (n+1) H(+)(in) = a plastoquinol + NADP(+) + n H(+)(out). NDH shuttles electrons from NAD(P)H:plastoquinone, via FMN and iron-sulfur (Fe-S) centers, to quinones in the photosynthetic chain and possibly in a chloroplast respiratory chain. The immediate electron acceptor for the enzyme in this species is believed to be plastoquinone. Couples the redox reaction to proton translocation, and thus conserves the redox energy in a proton gradient. The protein is NAD(P)H-quinone oxidoreductase subunit 5, chloroplastic (ndhF) of Zea mays (Maize).